The chain runs to 174 residues: NADH-quinone oxidoreductase subunit C (174 aa).

The protein belongs to the complex I 30 kDa subunit family. In terms of assembly, NDH-1 is composed of 14 different subunits. Subunits NuoB, C, D, E, F, and G constitute the peripheral sector of the complex.

Its subcellular location is the cell membrane. The catalysed reaction is a quinone + NADH + 5 H(+)(in) = a quinol + NAD(+) + 4 H(+)(out). Its function is as follows. NDH-1 shuttles electrons from NADH, via FMN and iron-sulfur (Fe-S) centers, to quinones in the respiratory chain. The immediate electron acceptor for the enzyme in this species is believed to be ubiquinone. Couples the redox reaction to proton translocation (for every two electrons transferred, four hydrogen ions are translocated across the cytoplasmic membrane), and thus conserves the redox energy in a proton gradient. The chain is NADH-quinone oxidoreductase subunit C from Roseiflexus castenholzii (strain DSM 13941 / HLO8).